A 483-amino-acid polypeptide reads, in one-letter code: Glutamate mutase epsilon subunit (483 aa).

L-glutamate is bound at residue Arg66. Gly68 serves as a coordination point for adenosylcob(III)alamin. Arg100 lines the L-glutamate pocket. Asn123 contributes to the adenosylcob(III)alamin binding site. L-glutamate contacts are provided by residues 149–150 (RH), Glu171, and Tyr177. Pro180 lines the adenosylcob(III)alamin pocket. L-glutamate is bound at residue Tyr181. Adenosylcob(III)alamin is bound by residues Phe297, Lys326, Glu330, and Ile334.

This sequence belongs to the methylaspartate mutase GlmE subunit family. In terms of assembly, heterotetramer composed of 2 epsilon subunits (GlmE) and 2 sigma subunits (GlmS). GlmE exists as a homodimer and GlmS as a monomer. Adenosylcob(III)alamin is required as a cofactor.

The enzyme catalyses (2S,3S)-3-methyl-L-aspartate = L-glutamate. It participates in amino-acid degradation; L-glutamate degradation via mesaconate pathway; acetate and pyruvate from L-glutamate: step 1/4. With respect to regulation, competitively inhibited by (2S,4S)-4-fluoroglutamate, 2-methyleneglutarate, (2R,3RS)-3-fluoroglutamate and (S)-3-methylitaconate. Functionally, catalyzes the carbon skeleton rearrangement of L-glutamate to L-threo-3-methylaspartate ((2S,3S)-3-methylaspartate). The polypeptide is Glutamate mutase epsilon subunit (Clostridium cochlearium).